The chain runs to 1072 residues: Rho family-interacting cell polarization regulator 2 (1072 aa).

Residues 83-112 are a coiled coil; the sequence is NGLDEYLEVHQTELDKLTAQLKDMRRNSRL. Residues 173–470 form a necessary for interaction with NCAM and myoblast protrusion formation region; sequence RESLTEINRS…ATTATQHRAR (298 aa). Disordered stretches follow at residues 439–465 and 683–718; these read DRVP…TTAT and EVEK…AGSP. Over residues 447–460 the composition is skewed to polar residues; that stretch reads AEPSSAHVTSSPDI. Over residues 683–698 the composition is skewed to basic and acidic residues; sequence EVEKNSYRTEHPEARG.

The protein belongs to the RIPOR family. In terms of assembly, homooligomer; homooligomerization is regulated by RHOC and leads to the formation of concatemers through the association of N- and C-termini. Interacts with NCAM; this interaction is necessary for myoblast protrusion formation. Expressed in myoblast and myotubes (at protein level). Expressed in brain, eyes and skeletal muscle.

The protein localises to the cytoplasm. It is found in the cytoskeleton. It localises to the cell projection. Its subcellular location is the filopodium. The protein resides in the apical cell membrane. The protein localises to the stereocilium. It is found in the stereocilium membrane. Functionally, acts as an inhibitor of the small GTPase RHOA and plays several roles in the regulation of myoblast and hair cell differentiation, lymphocyte T proliferation and neutrophil polarization. Plays a role in fetal mononuclear myoblast differentiation by promoting filopodia and myotube formation. Maintains naive T lymphocytes in a quiescent state and prevents chemokine-induced T lymphocyte responses, such as cell adhesion, polarization and migration. Involved also in the regulation of neutrophil polarization, chemotaxis and adhesion. Required for normal development of inner and outer hair cell stereocilia within the cochlea of the inner ear. Plays a role for maintaining the structural organization of the basal domain of stereocilia. Involved in mechanosensory hair cell function. Required for normal hearing. This Coturnix japonica (Japanese quail) protein is Rho family-interacting cell polarization regulator 2.